The primary structure comprises 490 residues: Cobyric acid synthase (490 aa).

A GATase cobBQ-type domain is found at 252 to 439 (RLKVVVPVLP…LHGLFESTAA (188 aa)). Cysteine 333 serves as the catalytic Nucleophile. Histidine 431 is a catalytic residue.

This sequence belongs to the CobB/CobQ family. CobQ subfamily.

Its pathway is cofactor biosynthesis; adenosylcobalamin biosynthesis. Catalyzes amidations at positions B, D, E, and G on adenosylcobyrinic A,C-diamide. NH(2) groups are provided by glutamine, and one molecule of ATP is hydrogenolyzed for each amidation. This is Cobyric acid synthase from Pseudomonas aeruginosa (strain ATCC 15692 / DSM 22644 / CIP 104116 / JCM 14847 / LMG 12228 / 1C / PRS 101 / PAO1).